The chain runs to 1154 residues: Voltage-gated inwardly rectifying potassium channel KCNH2 (1154 aa).

The Cytoplasmic portion of the chain corresponds to 1-403 (MPVRRGHVAP…RIHRWTILHY (403 aa)). In terms of domain architecture, PAS spans 41–70 (VIYCNDGFCELCGYSRAEVMQRPCTCDFLH). The PAC domain maps to 92–144 (RKVEIAFYRKDGSCFLCLVDVVPVKNEDGAVIMFILNFEVVMEKDMVGSPARD). A disordered region spans residues 233–312 (ALVGSGSPPA…ASTGAMHPLR (80 aa)). At S239 the chain carries Phosphoserine. The segment covering 258-269 (PDGSGSSCSLAR) has biased composition (polar residues). A phosphoserine mark is found at S283, S284, S320, and S351. Residues 404-424 (SPFKAVWDWLILLLVIYTAVF) form a helical membrane-spanning segment. The Extracellular portion of the chain corresponds to 425–450 (TPYSAAFLLKETEEGSQAPDCGYACQ). The chain crosses the membrane as a helical span at residues 451–471 (PLAVVDLIVDIMFIVDILINF). Topologically, residues 472–495 (RTTYVNANEEVVSHPGRIAVHYFK) are cytoplasmic. Residues 496 to 516 (GWFLIDMVAAIPFDLLIFGSG) traverse the membrane as a helical segment. Over 517–520 (SEEL) the chain is Extracellular. Residues 521-541 (IGLLKTARLLRLVRVARKLDR) form a helical; Voltage-sensor membrane-spanning segment. Topologically, residues 542–547 (YSEYGA) are cytoplasmic. A helical transmembrane segment spans residues 548 to 568 (AVLFLLMCTFALIAHWLACIW). At 569–611 (YAIGNMEQPNMDSHIGWLHNLGDQIGKPYNSSGLGGPSIKDKY) the chain is on the extracellular side. Residues 612–632 (VTALYFTFSSLTSVGFGNVSP) constitute an intramembrane region (pore-forming). The short motif at 624-629 (SVGFGN) is the Selectivity filter element. At 633–638 (NTNSEK) the chain is on the extracellular side. A helical transmembrane segment spans residues 639–659 (IFSICVMLIGSLMYASIFGNV). The Cytoplasmic segment spans residues 660 to 1154 (SAIIQRLYSG…LHRHGSDPGS (495 aa)). Positions 742–842 (PFRGATKGCL…IHRDDLLEVL (101 aa)) are cNMP-binding domain. Positions 870–985 (GSPGSTELEG…DVEKSSDTCN (116 aa)) are disordered. A phosphoserine mark is found at S871 and S874. A compositionally biased stretch (basic residues) spans 883–892 (RQRKRKLSFR). Gly residues predominate over residues 916–927 (GPSGRGQQGGPW). Low complexity predominate over residues 928–939 (GESLSSGPSSPE). R1014 carries the post-translational modification Omega-N-methylarginine. The stretch at 1037–1064 (RGDVESRLDALQRQLNRLETRLSADMAT) forms a coiled coil. The tract at residues 1125–1154 (DGPARRLSLPGQLGALTSQPLHRHGSDPGS) is disordered. At S1132 the chain carries Phosphoserine.

It belongs to the potassium channel family. H (Eag) (TC 1.A.1.20) subfamily. Kv11.1/KCNH2 sub-subfamily. As to quaternary structure, the potassium channel is probably composed of a homo- or heterotetrameric complex of pore-forming alpha subunits that can associate with modulating beta subunits. Interacts with DNAJB12 and DNAJB14; chaperones DNAJB12 and DNAJB14 promote tetramerization. Heteromultimer with KCNH6/ERG2 and KCNH7/ERG3. Interacts with ALG10B. Forms a stable complex with KCNE1 or KCNE2, and that this heteromultimerization regulates Inward rectifier potassium channel activity. Interacts with CANX. The core-glycosylated, but not the fully glycosylated form interacts with RNF207. Interacts with NDFIP1 and NDFIP2; this interaction decreases the cell membrane expression by targeting KCNH2, through interaction with NEDD4L, for the degradation through the multivesicular bodies (MVBs)-lysosomal pathway. Phosphorylated on serine and threonine residues. Phosphorylation by PKA inhibits ion conduction.

The protein resides in the cell membrane. The enzyme catalyses K(+)(in) = K(+)(out). Functionally, pore-forming (alpha) subunit of voltage-gated inwardly rectifying potassium channel. Characterized by unusual gating kinetics by producing relatively small outward currents during membrane depolarization and large inward currents during subsequent repolarization which reflect a rapid inactivation during depolarization and quick recovery from inactivation but slow deactivation (closing) during repolarization. Channel properties are modulated by cAMP and subunit assembly. Forms a stable complex with KCNE1 or KCNE2, and that this heteromultimerization regulates inward rectifier potassium channel activity. In Sus scrofa (Pig), this protein is Voltage-gated inwardly rectifying potassium channel KCNH2.